Consider the following 169-residue polypeptide: UPF0725 protein At2g19200 (169 aa).

It belongs to the UPF0725 (EMB2204) family.

This chain is UPF0725 protein At2g19200, found in Arabidopsis thaliana (Mouse-ear cress).